The primary structure comprises 329 residues: R-linalool synthase (329 aa).

D79 is a Mg(2+) binding site. The DDXXD motif motif lies at D79–D83. R172 provides a ligand contact to substrate. Residues N218 and S222 each coordinate Mg(2+). An NXXXSXXXD motif motif is present at residues N218 to D226. A substrate-binding site is contributed by K225. D226 lines the Mg(2+) pocket. R308 to Y309 lines the substrate pocket.

This sequence belongs to the terpene synthase family. In terms of assembly, homodimer. The cofactor is Mg(2+).

The catalysed reaction is (2E)-geranyl diphosphate + H2O = (R)-linalool + diphosphate. It carries out the reaction (2E,6E)-farnesyl diphosphate + H2O = (6E)-nerolidol + diphosphate. In vitro, catalyzes the formation of R-linalool from geranyl diphosphate (GPP). Can also accept farnesyl diphosphate (FPP) as substrate to produce trans-nerolidol. This is R-linalool synthase from Streptomyces clavuligerus.